The chain runs to 583 residues: Aspartate--tRNA ligase (583 aa).

An L-aspartate-binding site is contributed by Glu169. Residues 193-196 form an aspartate region; that stretch reads QLFK. Arg215 is a binding site for L-aspartate. Residues 215–217 and Gln224 each bind ATP; that span reads RDE. An L-aspartate-binding site is contributed by His443. Glu477 contributes to the ATP binding site. Residue Arg484 coordinates L-aspartate. Residue 529–532 coordinates ATP; the sequence is GIDR.

It belongs to the class-II aminoacyl-tRNA synthetase family. Type 1 subfamily. As to quaternary structure, homodimer.

It localises to the cytoplasm. The enzyme catalyses tRNA(Asp) + L-aspartate + ATP = L-aspartyl-tRNA(Asp) + AMP + diphosphate. Functionally, catalyzes the attachment of L-aspartate to tRNA(Asp) in a two-step reaction: L-aspartate is first activated by ATP to form Asp-AMP and then transferred to the acceptor end of tRNA(Asp). The polypeptide is Aspartate--tRNA ligase (Stenotrophomonas maltophilia (strain K279a)).